The following is a 153-amino-acid chain: ATP synthase subunit b' (153 aa).

A helical transmembrane segment spans residues 23–40 (LMAIQVVALTYILNSLFF).

The protein belongs to the ATPase B chain family. F-type ATPases have 2 components, F(1) - the catalytic core - and F(0) - the membrane proton channel. F(1) has five subunits: alpha(3), beta(3), gamma(1), delta(1), epsilon(1). F(0) has four main subunits: a(1), b(1), b'(1) and c(10-14). The alpha and beta chains form an alternating ring which encloses part of the gamma chain. F(1) is attached to F(0) by a central stalk formed by the gamma and epsilon chains, while a peripheral stalk is formed by the delta, b and b' chains.

Its subcellular location is the cellular thylakoid membrane. Its function is as follows. F(1)F(0) ATP synthase produces ATP from ADP in the presence of a proton or sodium gradient. F-type ATPases consist of two structural domains, F(1) containing the extramembraneous catalytic core and F(0) containing the membrane proton channel, linked together by a central stalk and a peripheral stalk. During catalysis, ATP synthesis in the catalytic domain of F(1) is coupled via a rotary mechanism of the central stalk subunits to proton translocation. In terms of biological role, component of the F(0) channel, it forms part of the peripheral stalk, linking F(1) to F(0). The b'-subunit is a diverged and duplicated form of b found in plants and photosynthetic bacteria. The protein is ATP synthase subunit b' of Prochlorococcus marinus (strain MIT 9515).